Reading from the N-terminus, the 1843-residue chain is Zinc finger protein 142 (1843 aa).

2 C2H2-type zinc fingers span residues 103–127 (YFCE…TETH) and 164–186 (LPCP…FKIH). The tract at residues 294–357 (PAAKLPPGHR…LEGHVGSGTE (64 aa)) is disordered. Positions 318-329 (SAEEEDAEEEES) are enriched in acidic residues. Basic and acidic residues predominate over residues 330-340 (VTQKDSQKVMD). Serine 354 carries the phosphoserine modification. A C2H2-type 3 zinc finger spans residues 363-385 (HMCPECKRCFKKRTHLVEHLHLH). A C2H2-type 4; degenerate zinc finger spans residues 391 to 413 (LQCPNCQKFFTSKSKLKTHLLRE). C2H2-type zinc fingers lie at residues 453 to 475 (YACP…LKSH), 543 to 566 (FHCP…KQGH), 601 to 623 (HQCS…MLLH), 629 to 651 (HKCE…MLTH), 657 to 679 (YMCT…MRKH), 685 to 707 (YQCN…KLRH), and 744 to 767 (YPCR…NCKH). A Glycyl lysine isopeptide (Lys-Gly) (interchain with G-Cter in SUMO2) cross-link involves residue lysine 794. Disordered regions lie at residues 819–888 (QCLA…LGEV) and 1103–1177 (PKPV…TGTS). Over residues 837–846 (PEREDREHEI) the composition is skewed to basic and acidic residues. Residues 1157-1167 (LPTPSDFPTSP) are compositionally biased toward pro residues. Polar residues predominate over residues 1168-1177 (PENSLPTGTS). 9 C2H2-type zinc fingers span residues 1331–1354 (LQCG…RLKH), 1388–1411 (IPCS…LRVH), 1446–1469 (FSCT…LRRH), 1514–1537 (LECG…RQHH), 1608–1630 (YKCT…SRIH), 1636–1658 (YHCH…MRIH), 1664–1686 (YLCP…MTKH), 1692–1715 (YQCP…ETRH), and 1721–1743 (FMCE…LRKH). Glycyl lysine isopeptide (Lys-Gly) (interchain with G-Cter in SUMO2) cross-links involve residues lysine 1353 and lysine 1402. A Glycyl lysine isopeptide (Lys-Gly) (interchain with G-Cter in SUMO2) cross-link involves residue lysine 1747. Residues 1749 to 1771 (YVCNVCHRAFRWAAGLRHHALTH) form a C2H2-type 21 zinc finger. The interval 1795–1843 (HVRRHHPDQADPNQGVGKDPTTPTVHLHDVKLEDPSPPAPPAPSTGPEG) is disordered. The span at 1829–1843 (PSPPAPPAPSTGPEG) shows a compositional bias: pro residues.

This sequence belongs to the krueppel C2H2-type zinc-finger protein family.

The protein resides in the nucleus. May be involved in transcriptional regulation. The chain is Zinc finger protein 142 from Mus musculus (Mouse).